Here is a 148-residue protein sequence, read N- to C-terminus: Deoxyuridine 5'-triphosphate nucleotidohydrolase (148 aa).

Substrate-binding positions include 67–69 (RSG), Asn-80, 84–86 (LID), and Met-94.

Belongs to the dUTPase family. Mg(2+) is required as a cofactor.

The enzyme catalyses dUTP + H2O = dUMP + diphosphate + H(+). The protein operates within pyrimidine metabolism; dUMP biosynthesis; dUMP from dCTP (dUTP route): step 2/2. Functionally, this enzyme is involved in nucleotide metabolism: it produces dUMP, the immediate precursor of thymidine nucleotides and it decreases the intracellular concentration of dUTP so that uracil cannot be incorporated into DNA. The chain is Deoxyuridine 5'-triphosphate nucleotidohydrolase from Francisella tularensis subsp. holarctica (strain FTNF002-00 / FTA).